The primary structure comprises 75 residues: Small ribosomal subunit protein bS18 (75 aa).

The protein belongs to the bacterial ribosomal protein bS18 family. In terms of assembly, part of the 30S ribosomal subunit. Forms a tight heterodimer with protein bS6.

Binds as a heterodimer with protein bS6 to the central domain of the 16S rRNA, where it helps stabilize the platform of the 30S subunit. This chain is Small ribosomal subunit protein bS18, found in Psychromonas ingrahamii (strain DSM 17664 / CCUG 51855 / 37).